Reading from the N-terminus, the 299-residue chain is Prolyl 4-hydroxylase 2 (299 aa).

The Cytoplasmic portion of the chain corresponds to 1–5 (MSMSR). The chain crosses the membrane as a helical; Signal-anchor for type II membrane protein span at residues 6-26 (LGLLLFVAILLVLLQSSTCLI). Over 27-299 (SSPSSIINPS…GNCRRSCKAC (273 aa)) the chain is Lumenal. A Fe2OG dioxygenase domain is found at 121–246 (NGEDLQVLRY…KWSATKWIHV (126 aa)). 2 residues coordinate Fe cation: histidine 139 and aspartate 141. Asparagine 165 carries an N-linked (GlcNAc...) asparagine glycan. Fe cation is bound at residue histidine 227. Lysine 237 lines the 2-oxoglutarate pocket. 2 N-linked (GlcNAc...) asparagine glycosylation sites follow: asparagine 258 and asparagine 263. Residues 259–299 (CTDVNESCERWAVLGECGKNPEYMVGTPEIPGNCRRSCKAC) enclose the ShKT domain. 3 disulfides stabilise this stretch: cysteine 259–cysteine 299, cysteine 266–cysteine 292, and cysteine 275–cysteine 296.

It belongs to the P4HA family. It depends on Fe(2+) as a cofactor. Requires L-ascorbate as cofactor. In terms of tissue distribution, expressed in epidermal root hair cells (trichoblasts).

It localises to the endoplasmic reticulum membrane. The protein localises to the golgi apparatus membrane. The catalysed reaction is L-prolyl-[collagen] + 2-oxoglutarate + O2 = trans-4-hydroxy-L-prolyl-[collagen] + succinate + CO2. Functionally, catalyzes the post-translational formation of 4-hydroxyproline in -Xaa-Pro-Gly- sequences in proline-rich peptide sequences of plant glycoproteins and other proteins. Hydroxyprolines are important constituent of many plant cell wall glycoproteins such as extensins, hydroxyproline-rich glycoproteins, lectins and arabinogalactan proteins. Possesses high affinity for leucine-rich repeat and proline-rich extensins of root cell walls that are essential for root hair development. Hydroxyprolines define the subsequent O-glycosylation sites by arabinosyltransferases which elongate the O-arabinosides on extensins. Has low affinity for the substrates tested in vitro. The polypeptide is Prolyl 4-hydroxylase 2 (Arabidopsis thaliana (Mouse-ear cress)).